Consider the following 131-residue polypeptide: Histone H2A.2 (131 aa).

A disordered region spans residues 1–22 (MSGGKGKAGSSEKASTSRSAKA). An N-acetylserine modification is found at Ser2. N6-acetyllysine occurs at positions 5 and 7. The residue at position 105 (Gln105) is an N5-methylglutamine. Position 128 is a phosphoserine (Ser128). The [ST]-Q motif motif lies at 128–129 (SQ).

It belongs to the histone H2A family. The nucleosome is a histone octamer containing two molecules each of H2A, H2B, H3 and H4 assembled in one H3-H4 heterotetramer and two H2A-H2B heterodimers. The octamer wraps approximately 147 bp of DNA. Phosphorylated to form H2AS128ph (gamma-H2A) in response to DNA double-strand breaks (DSBs) generated by exogenous genotoxic agents and by stalled replication forks. Phosphorylation is dependent on the DNA damage checkpoint kinases MEC1/ATR and TEL1/ATM, spreads on either side of a detected DSB site and may mark the surrounding chromatin for recruitment of proteins required for DNA damage signaling and repair. Gamma-H2A is removed from the DNA prior to the strand invasion-primer extension step of the repair process and subsequently dephosphorylated. Dephosphorylation is necessary for efficient recovery from the DNA damage checkpoint. In terms of processing, acetylated by ESA1 to form H2AK4ac and H2AK7ac.

It is found in the nucleus. The protein localises to the chromosome. In terms of biological role, core component of nucleosome which plays a central role in DNA double strand break (DSB) repair. Nucleosomes wrap and compact DNA into chromatin, limiting DNA accessibility to the cellular machineries which require DNA as a template. Histones thereby play a central role in transcription regulation, DNA repair, DNA replication and chromosomal stability. DNA accessibility is regulated via a complex set of post-translational modifications of histones, also called histone code, and nucleosome remodeling. The chain is Histone H2A.2 (HTA2) from Candida albicans (strain SC5314 / ATCC MYA-2876) (Yeast).